We begin with the raw amino-acid sequence, 525 residues long: Ubiquitin carboxyl-terminal hydrolase 22 (525 aa).

A UBP-type zinc finger spans residues 21 to 138 (PGCSHLGSFK…KEEQRKAWKM (118 aa)). Zn(2+) is bound by residues cysteine 23, histidine 25, cysteine 63, cysteine 66, cysteine 76, cysteine 79, cysteine 84, histidine 89, histidine 93, histidine 99, cysteine 112, and cysteine 115. Position 129 is an N6-acetyllysine (lysine 129). Threonine 147 is subject to Phosphothreonine; by CDK1. One can recognise a USP domain in the interval 176 to 520 (RGLINLGNTC…EGYLLFYHKQ (345 aa)). The Nucleophile role is filled by cysteine 185. At serine 237 the chain carries Phosphoserine; by CDK1. The active-site Proton acceptor is the histidine 479.

The protein belongs to the peptidase C19 family. UBP8 subfamily. In terms of assembly, component of some SAGA transcription coactivator-HAT complexes, at least composed of ATXN7, ATXN7L3, ENY2, GCN5L2, SUPT3H, TAF10, TRRAP and USP22. Within the SAGA complex, ATXN7L3, ENY2 and USP22 form a subcomplex required for histone deubiquitination. Interacts directly with ATXN7L3; leading to its recruitment to the SAGA complex. Interacts with ATXN7L3 and weakly with ATXN7L3B. Interacts with MED1. Post-translationally, phosphorylated in G2/M phase, but not in G1 phase by CDK1. In terms of processing, ubiquitinated and subsequently degraded in a CDC20-dependent manner. Moderately expressed in various tissues including heart and skeletal muscle, and weakly expressed in lung and liver.

Its subcellular location is the nucleus. It is found in the cytoplasm. It catalyses the reaction Thiol-dependent hydrolysis of ester, thioester, amide, peptide and isopeptide bonds formed by the C-terminal Gly of ubiquitin (a 76-residue protein attached to proteins as an intracellular targeting signal).. Functionally, deubiquitinase that plays a role in several cellular processes including transcriptional regulation, cell cycle progression or innate immunity. As part of the transcription regulatory histone acetylation (HAT) complex SAGA, catalyzes the deubiquitination of both histones H2A and H2B, thereby acting as a transcriptional coactivator. Recruited to specific gene promoters by activators such as MYC, where it is required for transcription. Facilitates cell-cycle progression by stabilizing CCNB1 and antagonizing its proteasome-mediated degradation in a cell cycle-specific manner. Modulates cell cycle progression and apoptosis also by antagonizing TP53 transcriptional activation through deacetylase SIRT1 stabilization. Plays multiple roles in immunity and inflammation. Participates in antiviral response by deubiquitinating the importin KPNA2, leading to IRF3 nuclear translocation and subsequent type I interferon production. Acts as a central regulator of type III IFN signaling by negatively regulating STING1 activation and ubiquitination. Inhibits NLRP3 inflammasome activation by promoting NLRP3 degradation through ATG5-dependent autophagy. Deubiquitinates CD274 to induce its stabilization and thereby participates in maintenance of immune tolerance to self. Controls necroptotic cell death by regulating RIPK3 phosphorylation and ubiquitination. During bacterial infection, promotes pro-inflammatory response by targeting TRAF6 and removing its 'Lys-48'-linked polyubiquitination. This is Ubiquitin carboxyl-terminal hydrolase 22 (USP22) from Homo sapiens (Human).